We begin with the raw amino-acid sequence, 169 residues long: S-ribosylhomocysteine lyase (169 aa).

3 residues coordinate Fe cation: His-54, His-58, and Cys-128.

The protein belongs to the LuxS family. As to quaternary structure, homodimer. Fe cation serves as cofactor.

It catalyses the reaction S-(5-deoxy-D-ribos-5-yl)-L-homocysteine = (S)-4,5-dihydroxypentane-2,3-dione + L-homocysteine. Its function is as follows. Involved in the synthesis of autoinducer 2 (AI-2) which is secreted by bacteria and is used to communicate both the cell density and the metabolic potential of the environment. The regulation of gene expression in response to changes in cell density is called quorum sensing. Catalyzes the transformation of S-ribosylhomocysteine (RHC) to homocysteine (HC) and 4,5-dihydroxy-2,3-pentadione (DPD). The chain is S-ribosylhomocysteine lyase from Shewanella pealeana (strain ATCC 700345 / ANG-SQ1).